We begin with the raw amino-acid sequence, 190 residues long: Elongation factor P-like protein (190 aa).

Belongs to the elongation factor P family.

The protein is Elongation factor P-like protein of Shigella boydii serotype 4 (strain Sb227).